Consider the following 275-residue polypeptide: 4-hydroxy-3-methylbut-2-enyl diphosphate reductase (275 aa).

Cys-12 provides a ligand contact to [4Fe-4S] cluster. (2E)-4-hydroxy-3-methylbut-2-enyl diphosphate contacts are provided by His-36 and His-70. The dimethylallyl diphosphate site is built by His-36 and His-70. Residues His-36 and His-70 each contribute to the isopentenyl diphosphate site. Cys-92 contributes to the [4Fe-4S] cluster binding site. A (2E)-4-hydroxy-3-methylbut-2-enyl diphosphate-binding site is contributed by His-120. Residue His-120 participates in dimethylallyl diphosphate binding. His-120 serves as a coordination point for isopentenyl diphosphate. The active-site Proton donor is the Glu-122. Residue Thr-157 coordinates (2E)-4-hydroxy-3-methylbut-2-enyl diphosphate. Cys-185 serves as a coordination point for [4Fe-4S] cluster. (2E)-4-hydroxy-3-methylbut-2-enyl diphosphate contacts are provided by Ser-213, Ser-214, Asn-215, and Ser-257. 4 residues coordinate dimethylallyl diphosphate: Ser-213, Ser-214, Asn-215, and Ser-257. Isopentenyl diphosphate is bound by residues Ser-213, Ser-214, Asn-215, and Ser-257.

This sequence belongs to the IspH family. Requires [4Fe-4S] cluster as cofactor.

It carries out the reaction isopentenyl diphosphate + 2 oxidized [2Fe-2S]-[ferredoxin] + H2O = (2E)-4-hydroxy-3-methylbut-2-enyl diphosphate + 2 reduced [2Fe-2S]-[ferredoxin] + 2 H(+). The catalysed reaction is dimethylallyl diphosphate + 2 oxidized [2Fe-2S]-[ferredoxin] + H2O = (2E)-4-hydroxy-3-methylbut-2-enyl diphosphate + 2 reduced [2Fe-2S]-[ferredoxin] + 2 H(+). Its pathway is isoprenoid biosynthesis; dimethylallyl diphosphate biosynthesis; dimethylallyl diphosphate from (2E)-4-hydroxy-3-methylbutenyl diphosphate: step 1/1. It participates in isoprenoid biosynthesis; isopentenyl diphosphate biosynthesis via DXP pathway; isopentenyl diphosphate from 1-deoxy-D-xylulose 5-phosphate: step 6/6. Its function is as follows. Catalyzes the conversion of 1-hydroxy-2-methyl-2-(E)-butenyl 4-diphosphate (HMBPP) into a mixture of isopentenyl diphosphate (IPP) and dimethylallyl diphosphate (DMAPP). Acts in the terminal step of the DOXP/MEP pathway for isoprenoid precursor biosynthesis. This Nitratiruptor sp. (strain SB155-2) protein is 4-hydroxy-3-methylbut-2-enyl diphosphate reductase.